Consider the following 380-residue polypeptide: RNA-binding motif protein, Y chromosome, family 9 (380 aa).

The region spanning 8-86 (GKIFIGGLNI…KRIKVKQARR (79 aa)) is the RRM domain. Disordered stretches follow at residues 82–226 (KQAR…STSR) and 279–358 (HEAP…YSAS). The segment covering 166–178 (RSATSAQTRSNTG) has biased composition (polar residues). Composition is skewed to basic and acidic residues over residues 180–190 (RGREPHRREIS) and 333–351 (IDRE…HSPK).

As to expression, testis-specific.

It localises to the nucleus. Its function is as follows. RNA-binding protein which may be involved in spermatogenesis. May be required for sperm development, possibly by participating in pre-mRNA splicing in the testis. The protein is RNA-binding motif protein, Y chromosome, family 9 of Mus musculus (Mouse).